A 206-amino-acid chain; its full sequence is Large ribosomal subunit protein uL4 (206 aa).

It belongs to the universal ribosomal protein uL4 family. As to quaternary structure, part of the 50S ribosomal subunit.

Its function is as follows. One of the primary rRNA binding proteins, this protein initially binds near the 5'-end of the 23S rRNA. It is important during the early stages of 50S assembly. It makes multiple contacts with different domains of the 23S rRNA in the assembled 50S subunit and ribosome. Forms part of the polypeptide exit tunnel. The polypeptide is Large ribosomal subunit protein uL4 (Rhodopseudomonas palustris (strain BisB18)).